Consider the following 508-residue polypeptide: Maturase K (508 aa).

The protein belongs to the intron maturase 2 family. MatK subfamily.

It localises to the plastid. The protein resides in the chloroplast. Functionally, usually encoded in the trnK tRNA gene intron. Probably assists in splicing its own and other chloroplast group II introns. In Coronilla varia (Crown vetch), this protein is Maturase K.